Here is a 344-residue protein sequence, read N- to C-terminus: Sulfate/thiosulfate import ATP-binding protein CysA (344 aa).

Residues 3-233 (ILIDNVSKNF…PESAFVMSFL (231 aa)) form the ABC transporter domain. Residue 35–42 (GPSGCGKS) coordinates ATP.

This sequence belongs to the ABC transporter superfamily. Sulfate/tungstate importer (TC 3.A.1.6) family. As to quaternary structure, the complex is composed of two ATP-binding proteins (CysA), two transmembrane proteins (CysT and CysW) and a solute-binding protein (CysP).

It localises to the cell inner membrane. The enzyme catalyses sulfate(out) + ATP + H2O = sulfate(in) + ADP + phosphate + H(+). The catalysed reaction is thiosulfate(out) + ATP + H2O = thiosulfate(in) + ADP + phosphate + H(+). In terms of biological role, part of the ABC transporter complex CysAWTP involved in sulfate/thiosulfate import. Responsible for energy coupling to the transport system. This is Sulfate/thiosulfate import ATP-binding protein CysA from Gloeobacter violaceus (strain ATCC 29082 / PCC 7421).